The sequence spans 401 residues: Arylacetamide deacetylase-like 2 (401 aa).

An N-terminal signal peptide occupies residues 1-18 (MGLKALCLGLLCVLFVSH). The Involved in the stabilization of the negatively charged intermediate by the formation of the oxyanion hole signature appears at 111–113 (HGG). Cysteine 116 and cysteine 338 are joined by a disulfide. Active-site residues include serine 189, aspartate 341, and histidine 371.

It belongs to the 'GDXG' lipolytic enzyme family.

It localises to the secreted. This Homo sapiens (Human) protein is Arylacetamide deacetylase-like 2 (AADACL2).